A 177-amino-acid polypeptide reads, in one-letter code: Adenine phosphoribosyltransferase (177 aa).

Belongs to the purine/pyrimidine phosphoribosyltransferase family. As to quaternary structure, homodimer.

The protein localises to the cytoplasm. The enzyme catalyses AMP + diphosphate = 5-phospho-alpha-D-ribose 1-diphosphate + adenine. It functions in the pathway purine metabolism; AMP biosynthesis via salvage pathway; AMP from adenine: step 1/1. Catalyzes a salvage reaction resulting in the formation of AMP, that is energically less costly than de novo synthesis. This Chlorobium chlorochromatii (strain CaD3) protein is Adenine phosphoribosyltransferase.